The chain runs to 145 residues: Superoxide dismutase [Mn/Fe] (145 aa).

Fe(3+) is bound by residues histidine 10 and histidine 64. Mn(2+) contacts are provided by histidine 10 and histidine 64.

Belongs to the iron/manganese superoxide dismutase family. The cofactor is Mn(2+). Requires Fe(3+) as cofactor.

The catalysed reaction is 2 superoxide + 2 H(+) = H2O2 + O2. In terms of biological role, destroys superoxide anion radicals which are normally produced within the cells and which are toxic to biological systems. Catalyzes the dismutation of superoxide anion radicals into O2 and H2O2 by successive reduction and oxidation of the transition metal ion at the active site. In Streptococcus canis, this protein is Superoxide dismutase [Mn/Fe] (sodA).